A 297-amino-acid chain; its full sequence is Probable lipid kinase YegS-like (297 aa).

The region spanning 2 to 131 (STFPASLLIL…IDIARVNDKT (130 aa)) is the DAGKc domain. ATP-binding positions include Thr-40, 66-72 (GDGTINE), and Thr-93. Residues Leu-213, Asp-216, and Leu-218 each coordinate Mg(2+). Glu-269 functions as the Proton acceptor in the catalytic mechanism.

It belongs to the diacylglycerol/lipid kinase family. YegS lipid kinase subfamily. Mg(2+) serves as cofactor. Ca(2+) is required as a cofactor.

It is found in the cytoplasm. Its function is as follows. Probably phosphorylates lipids; the in vivo substrate is unknown. This Klebsiella pneumoniae (strain 342) protein is Probable lipid kinase YegS-like.